The following is a 76-amino-acid chain: MSVEEKVKKIIMDQLGVSAEEVKPEASFVEDLGADSLDLTELIMAMEEEFGVEIDDDDAQKILKVKDAIDYVSNKQ.

The 76-residue stretch at 1-76 (MSVEEKVKKI…DAIDYVSNKQ (76 aa)) folds into the Carrier domain. Serine 36 is modified (O-(pantetheine 4'-phosphoryl)serine).

Belongs to the acyl carrier protein (ACP) family. 4'-phosphopantetheine is transferred from CoA to a specific serine of apo-ACP by AcpS. This modification is essential for activity because fatty acids are bound in thioester linkage to the sulfhydryl of the prosthetic group.

It is found in the cytoplasm. It participates in lipid metabolism; fatty acid biosynthesis. Its function is as follows. Carrier of the growing fatty acid chain in fatty acid biosynthesis. The protein is Acyl carrier protein of Nitratidesulfovibrio vulgaris (strain ATCC 29579 / DSM 644 / CCUG 34227 / NCIMB 8303 / VKM B-1760 / Hildenborough) (Desulfovibrio vulgaris).